The primary structure comprises 315 residues: Acetyl-coenzyme A carboxylase carboxyl transferase subunit alpha (315 aa).

In terms of domain architecture, CoA carboxyltransferase C-terminal spans L36 to I289.

The protein belongs to the AccA family. As to quaternary structure, acetyl-CoA carboxylase is a heterohexamer composed of biotin carboxyl carrier protein (AccB), biotin carboxylase (AccC) and two subunits each of ACCase subunit alpha (AccA) and ACCase subunit beta (AccD).

The protein localises to the cytoplasm. It carries out the reaction N(6)-carboxybiotinyl-L-lysyl-[protein] + acetyl-CoA = N(6)-biotinyl-L-lysyl-[protein] + malonyl-CoA. It participates in lipid metabolism; malonyl-CoA biosynthesis; malonyl-CoA from acetyl-CoA: step 1/1. Its function is as follows. Component of the acetyl coenzyme A carboxylase (ACC) complex. First, biotin carboxylase catalyzes the carboxylation of biotin on its carrier protein (BCCP) and then the CO(2) group is transferred by the carboxyltransferase to acetyl-CoA to form malonyl-CoA. The protein is Acetyl-coenzyme A carboxylase carboxyl transferase subunit alpha of Francisella tularensis subsp. tularensis (strain FSC 198).